We begin with the raw amino-acid sequence, 391 residues long: Ferrochelatase (391 aa).

The Fe cation site is built by histidine 196 and glutamate 281.

This sequence belongs to the ferrochelatase family.

It is found in the cytoplasm. It catalyses the reaction heme b + 2 H(+) = protoporphyrin IX + Fe(2+). It participates in porphyrin-containing compound metabolism; protoheme biosynthesis; protoheme from protoporphyrin-IX: step 1/1. Catalyzes the ferrous insertion into protoporphyrin IX. The polypeptide is Ferrochelatase (Prochlorococcus marinus (strain MIT 9301)).